Consider the following 138-residue polypeptide: Rapid alkalinization factor 23 (138 aa).

The first 28 residues, 1–28, serve as a signal peptide directing secretion; the sequence is MRGLSRNSGAAAIFAILLILAVHNWSVA. Residues 29–88 constitute a propeptide, removed in mature form; it reads VSSQSTEFAGDFPPFETECRGTIAECSVSAALGDGGDLFYGGGEMGEEFEMDSEINRRIL. Disulfide bonds link Cys-106–Cys-116 and Cys-129–Cys-135.

The protein belongs to the plant rapid alkalinization factor (RALF) family. In terms of processing, proteolytically cleaved, probably by SBT6.1 (S1P), a subtilisin-like serine protease (subtilase).

Its subcellular location is the secreted. In terms of biological role, cell signaling peptide that may regulate plant stress, growth, and development. Mediates a rapid alkalinization of extracellular space by mediating a transient increase in the cytoplasmic Ca(2+) concentration leading to a calcium-dependent signaling events through a cell surface receptor and a concomitant activation of some intracellular mitogen-activated protein kinases. Negatively regulates brassinolide (BL)-mediated signaling pathway (e.g. BL-induced hypocotyl elongation and branching limitation). The polypeptide is Rapid alkalinization factor 23 (RALF23) (Arabidopsis thaliana (Mouse-ear cress)).